We begin with the raw amino-acid sequence, 482 residues long: Anaerobic nitric oxide reductase flavorubredoxin (482 aa).

The zinc metallo-hydrolase stretch occupies residues 30–210 (LRGSSYNSYL…PFSRLVTPKI (181 aa)). Fe cation is bound by residues His-79, Glu-81, Asp-83, His-147, Asp-166, and His-227. The region spanning 254 to 393 (ITIFYDTMSN…LCRQHGRDIA (140 aa)) is the Flavodoxin-like domain. FMN-binding positions include 260–264 (TMSNN) and 342–369 (AFGS…EMSL). Positions 426–477 (GPSMQCSVCQWIYDPAKGEPLQDVAPGTPWSDVPDNFLCPECSLGKDVFDVL) constitute a Rubredoxin-like domain. 4 residues coordinate Fe cation: Cys-431, Cys-434, Cys-464, and Cys-467.

It in the N-terminal section; belongs to the zinc metallo-hydrolase group 3 family. Homotetramer. It depends on Fe cation as a cofactor. FMN is required as a cofactor.

Its subcellular location is the cytoplasm. It participates in nitrogen metabolism; nitric oxide reduction. In terms of biological role, anaerobic nitric oxide reductase; uses NADH to detoxify nitric oxide (NO), protecting several 4Fe-4S NO-sensitive enzymes. Has at least 2 reductase partners, only one of which (NorW, flavorubredoxin reductase) has been identified. NO probably binds to the di-iron center; electrons enter from the NorW at rubredoxin and are transferred sequentially to the FMN center and the di-iron center. Also able to function as an aerobic oxygen reductase. The sequence is that of Anaerobic nitric oxide reductase flavorubredoxin from Citrobacter koseri (strain ATCC BAA-895 / CDC 4225-83 / SGSC4696).